A 644-amino-acid polypeptide reads, in one-letter code: 3-isopropylmalate dehydratase (644 aa).

[4Fe-4S] cluster contacts are provided by cysteine 400, cysteine 460, and cysteine 463. Positions 521–568 (SEIPGTPKQSPRQEVVAEFESEEDDVDSSSVDSAPVATPPSTGDSAGM) are disordered. The segment covering 537–547 (AEFESEEDDVD) has biased composition (acidic residues).

Belongs to the aconitase/IPM isomerase family. Monomer. The cofactor is [4Fe-4S] cluster.

It carries out the reaction (2R,3S)-3-isopropylmalate = (2S)-2-isopropylmalate. Its pathway is amino-acid biosynthesis; L-leucine biosynthesis; L-leucine from 3-methyl-2-oxobutanoate: step 2/4. Its function is as follows. Catalyzes the isomerization between 2-isopropylmalate and 3-isopropylmalate, via the formation of 2-isopropylmaleate. This chain is 3-isopropylmalate dehydratase (LEUA), found in Mucor circinelloides f. lusitanicus (Mucor racemosus var. lusitanicus).